The following is a 187-amino-acid chain: dTTP/UTP pyrophosphatase (187 aa).

Aspartate 65 functions as the Proton acceptor in the catalytic mechanism.

It belongs to the Maf family. YhdE subfamily. The cofactor is a divalent metal cation.

It is found in the cytoplasm. It carries out the reaction dTTP + H2O = dTMP + diphosphate + H(+). The enzyme catalyses UTP + H2O = UMP + diphosphate + H(+). Its function is as follows. Nucleoside triphosphate pyrophosphatase that hydrolyzes dTTP and UTP. May have a dual role in cell division arrest and in preventing the incorporation of modified nucleotides into cellular nucleic acids. This is dTTP/UTP pyrophosphatase from Pyrococcus abyssi (strain GE5 / Orsay).